Consider the following 78-residue polypeptide: D-alanyl carrier protein (78 aa).

The 77-residue stretch at 1–77 (MDLKEQIVEI…KVVAKVESLI (77 aa)) folds into the Carrier domain. Residue S35 is modified to O-(pantetheine 4'-phosphoryl)serine.

This sequence belongs to the DltC family. 4'-phosphopantetheine is transferred from CoA to a specific serine of apo-DCP.

It localises to the cytoplasm. The protein operates within cell wall biogenesis; lipoteichoic acid biosynthesis. Carrier protein involved in the D-alanylation of lipoteichoic acid (LTA). The loading of thioester-linked D-alanine onto DltC is catalyzed by D-alanine--D-alanyl carrier protein ligase DltA. The DltC-carried D-alanyl group is further transferred to cell membrane phosphatidylglycerol (PG) by forming an ester bond, probably catalyzed by DltD. D-alanylation of LTA plays an important role in modulating the properties of the cell wall in Gram-positive bacteria, influencing the net charge of the cell wall. The protein is D-alanyl carrier protein of Leuconostoc mesenteroides subsp. mesenteroides (strain ATCC 8293 / DSM 20343 / BCRC 11652 / CCM 1803 / JCM 6124 / NCDO 523 / NBRC 100496 / NCIMB 8023 / NCTC 12954 / NRRL B-1118 / 37Y).